We begin with the raw amino-acid sequence, 557 residues long: Dihydroxy-acid dehydratase (557 aa).

C49 lines the [2Fe-2S] cluster pocket. Residue D81 coordinates Mg(2+). C122 contributes to the [2Fe-2S] cluster binding site. 2 residues coordinate Mg(2+): D123 and K124. K124 is modified (N6-carboxylysine). C194 contributes to the [2Fe-2S] cluster binding site. Position 446 (E446) interacts with Mg(2+). S472 serves as the catalytic Proton acceptor.

The protein belongs to the IlvD/Edd family. As to quaternary structure, homodimer. [2Fe-2S] cluster serves as cofactor. It depends on Mg(2+) as a cofactor.

It catalyses the reaction (2R)-2,3-dihydroxy-3-methylbutanoate = 3-methyl-2-oxobutanoate + H2O. The enzyme catalyses (2R,3R)-2,3-dihydroxy-3-methylpentanoate = (S)-3-methyl-2-oxopentanoate + H2O. The protein operates within amino-acid biosynthesis; L-isoleucine biosynthesis; L-isoleucine from 2-oxobutanoate: step 3/4. It functions in the pathway amino-acid biosynthesis; L-valine biosynthesis; L-valine from pyruvate: step 3/4. Functions in the biosynthesis of branched-chain amino acids. Catalyzes the dehydration of (2R,3R)-2,3-dihydroxy-3-methylpentanoate (2,3-dihydroxy-3-methylvalerate) into 2-oxo-3-methylpentanoate (2-oxo-3-methylvalerate) and of (2R)-2,3-dihydroxy-3-methylbutanoate (2,3-dihydroxyisovalerate) into 2-oxo-3-methylbutanoate (2-oxoisovalerate), the penultimate precursor to L-isoleucine and L-valine, respectively. In Prochlorococcus marinus (strain MIT 9312), this protein is Dihydroxy-acid dehydratase.